A 378-amino-acid chain; its full sequence is MNDKKVIVLAAGGTGGHLFPAEALAVELRQRGYDVHLITDERARSFVRRFDEEHTHIVSSATFTRCHPFALIKTILSLLKGMGQSLRLFYKLRPVLVGGFGGYPSFPPLFIAVLMRRVTFIHEQNAVMGRANRVLAIFVRAIAGGLLSPKGAYAHKTLLTGNPVREAVLKAAEIPYHSPVGEEPFNFLVFGGSQGASFFSHIVPEAVALLDDQNRKRLRIVQQVRGDAAGLIKIYRDMGVQAEVAPFFDDMAERMAHAHFILSRAGASSVCEIAVIGRPALLIPYPYALDYDQAENAALLARVGGAQIISEKDLSAQKLAALLTQACCAPHLLEKQALAAKKVGQPYATRCLADMAEALIAGRLLSDIKEELFDENAT.

UDP-N-acetyl-alpha-D-glucosamine is bound by residues 14–16 (TGG), asparagine 125, arginine 165, serine 193, and glutamine 293.

This sequence belongs to the glycosyltransferase 28 family. MurG subfamily.

Its subcellular location is the cell inner membrane. It carries out the reaction di-trans,octa-cis-undecaprenyl diphospho-N-acetyl-alpha-D-muramoyl-L-alanyl-D-glutamyl-meso-2,6-diaminopimeloyl-D-alanyl-D-alanine + UDP-N-acetyl-alpha-D-glucosamine = di-trans,octa-cis-undecaprenyl diphospho-[N-acetyl-alpha-D-glucosaminyl-(1-&gt;4)]-N-acetyl-alpha-D-muramoyl-L-alanyl-D-glutamyl-meso-2,6-diaminopimeloyl-D-alanyl-D-alanine + UDP + H(+). It participates in cell wall biogenesis; peptidoglycan biosynthesis. In terms of biological role, cell wall formation. Catalyzes the transfer of a GlcNAc subunit on undecaprenyl-pyrophosphoryl-MurNAc-pentapeptide (lipid intermediate I) to form undecaprenyl-pyrophosphoryl-MurNAc-(pentapeptide)GlcNAc (lipid intermediate II). The protein is UDP-N-acetylglucosamine--N-acetylmuramyl-(pentapeptide) pyrophosphoryl-undecaprenol N-acetylglucosamine transferase of Bartonella tribocorum (strain CIP 105476 / IBS 506).